The following is a 414-amino-acid chain: S-adenosylmethionine synthase (414 aa).

His11 is an ATP binding site. Position 13 (Asp13) interacts with Mg(2+). Glu39 is a binding site for K(+). Positions 52 and 95 each coordinate L-methionine. A flexible loop region spans residues 95 to 105 (QSPDIAQGVNM). Residues 169–171 (DGK), 245–246 (KF), Asp254, 260–261 (RK), Ala277, and Lys281 each bind ATP. Asp254 is an L-methionine binding site. Lys285 is a binding site for L-methionine.

This sequence belongs to the AdoMet synthase family. In terms of assembly, homotetramer; dimer of dimers. Mg(2+) is required as a cofactor. The cofactor is K(+).

It localises to the cytoplasm. It catalyses the reaction L-methionine + ATP + H2O = S-adenosyl-L-methionine + phosphate + diphosphate. Its pathway is amino-acid biosynthesis; S-adenosyl-L-methionine biosynthesis; S-adenosyl-L-methionine from L-methionine: step 1/1. Its function is as follows. Catalyzes the formation of S-adenosylmethionine (AdoMet) from methionine and ATP. The overall synthetic reaction is composed of two sequential steps, AdoMet formation and the subsequent tripolyphosphate hydrolysis which occurs prior to release of AdoMet from the enzyme. The sequence is that of S-adenosylmethionine synthase from Synechococcus sp. (strain JA-2-3B'a(2-13)) (Cyanobacteria bacterium Yellowstone B-Prime).